Reading from the N-terminus, the 316-residue chain is MTEAFKHISVLLNESIDGLAIKPDGTYIDGTFGRGGHSRTILSKLGENGRLFSIDRDPQAIAEAQKIDDPRFTIIHGPFSGMAEYAERYDLVGQVDGVLLDLGVSSPQLDDAERGFSFMKDGPLDMRMDPTTGIPVSQWLVEADLDDITWVIREFGEDKHARRIAKGIIAYQENEENEPLTRTGQLAKLISDVAPKSFKEKKHPATRAFQAFRIYINSELEEIDTALKGAASILAPQGRISVISFHSLEDRMVKRFIRKESQGPQVPHGLPLTEEQIKALGSADLKPIGKAIKPSKDEVDENTRSRSSVLRIAEKL.

S-adenosyl-L-methionine is bound by residues 35–37, Asp-55, Phe-79, Asp-101, and Gln-108; that span reads GGH. The interval 291–316 is disordered; it reads AIKPSKDEVDENTRSRSSVLRIAEKL. A compositionally biased stretch (basic and acidic residues) spans 294–304; that stretch reads PSKDEVDENTR.

The protein belongs to the methyltransferase superfamily. RsmH family.

It is found in the cytoplasm. The enzyme catalyses cytidine(1402) in 16S rRNA + S-adenosyl-L-methionine = N(4)-methylcytidine(1402) in 16S rRNA + S-adenosyl-L-homocysteine + H(+). Functionally, specifically methylates the N4 position of cytidine in position 1402 (C1402) of 16S rRNA. This is Ribosomal RNA small subunit methyltransferase H from Vibrio atlanticus (strain LGP32) (Vibrio splendidus (strain Mel32)).